Reading from the N-terminus, the 25-residue chain is Pregnancy-associated glycoprotein 74 (25 aa).

N-linked (GlcNAc...) asparagine glycans are attached at residues N4 and N21.

Belongs to the peptidase A1 family. Post-translationally, N-glycosylated. In terms of tissue distribution, placental cotyledons.

Its subcellular location is the secreted. It is found in the extracellular space. The chain is Pregnancy-associated glycoprotein 74 from Bison bison (American bison).